The chain runs to 790 residues: Polyribonucleotide nucleotidyltransferase (790 aa).

2 residues coordinate Mg(2+): aspartate 498 and aspartate 504. Positions 565-624 (PRILRIKIKPEQIGEVIGPGGRVIRAIQEQTGTKISIEEDGTVFISAANEDAARRAVREI) constitute a KH domain. The S1 motif domain occupies 634 to 702 (GEIFYGRVVT…PDGKINLSRK (69 aa)). The tract at residues 710 to 790 (AERAATAQAP…KELLGEDEPN (81 aa)) is disordered. The segment covering 739 to 755 (PERRPGPPTPRRPEQRG) has biased composition (basic and acidic residues). Positions 757 to 772 (SRPPRPQAQRSTPPPG) are enriched in pro residues.

This sequence belongs to the polyribonucleotide nucleotidyltransferase family. The cofactor is Mg(2+).

Its subcellular location is the cytoplasm. It catalyses the reaction RNA(n+1) + phosphate = RNA(n) + a ribonucleoside 5'-diphosphate. Functionally, involved in mRNA degradation. Catalyzes the phosphorolysis of single-stranded polyribonucleotides processively in the 3'- to 5'-direction. This Thermomicrobium roseum (strain ATCC 27502 / DSM 5159 / P-2) protein is Polyribonucleotide nucleotidyltransferase.